We begin with the raw amino-acid sequence, 164 residues long: Phosphopantetheine adenylyltransferase (164 aa).

A substrate-binding site is contributed by threonine 9. ATP-binding positions include 9–10 (TF) and histidine 17. Substrate is bound by residues lysine 41, threonine 76, and arginine 90. ATP is bound by residues 91 to 93 (GLR), glutamate 101, and 126 to 132 (YQFVSSS).

Belongs to the bacterial CoaD family. Homohexamer. Mg(2+) serves as cofactor.

The protein resides in the cytoplasm. The catalysed reaction is (R)-4'-phosphopantetheine + ATP + H(+) = 3'-dephospho-CoA + diphosphate. Its pathway is cofactor biosynthesis; coenzyme A biosynthesis; CoA from (R)-pantothenate: step 4/5. Its function is as follows. Reversibly transfers an adenylyl group from ATP to 4'-phosphopantetheine, yielding dephospho-CoA (dPCoA) and pyrophosphate. The sequence is that of Phosphopantetheine adenylyltransferase from Coprothermobacter proteolyticus (strain ATCC 35245 / DSM 5265 / OCM 4 / BT).